A 545-amino-acid chain; its full sequence is CTP synthase (545 aa).

The interval 1 to 266 (MKTKFIFITG…DQKIAIMLKL (266 aa)) is amidoligase domain. Ser-14 is a CTP binding site. Ser-14 is a UTP binding site. ATP contacts are provided by residues 15 to 20 (SLGKGL) and Asp-72. Mg(2+) contacts are provided by Asp-72 and Glu-140. Residues 147 to 149 (DIE), 187 to 192 (KTKPTQ), and Lys-223 each bind CTP. UTP contacts are provided by residues 187 to 192 (KTKPTQ) and Lys-223. The 255-residue stretch at 291 to 545 (TIGIVGKYVD…IKASCENKNK (255 aa)) folds into the Glutamine amidotransferase type-1 domain. Gly-353 is a binding site for L-glutamine. Cys-380 serves as the catalytic Nucleophile; for glutamine hydrolysis. L-glutamine is bound by residues 381–384 (LGMQ), Glu-404, and Arg-472. Residues His-518 and Glu-520 contribute to the active site.

Belongs to the CTP synthase family. Homotetramer.

It catalyses the reaction UTP + L-glutamine + ATP + H2O = CTP + L-glutamate + ADP + phosphate + 2 H(+). The catalysed reaction is L-glutamine + H2O = L-glutamate + NH4(+). It carries out the reaction UTP + NH4(+) + ATP = CTP + ADP + phosphate + 2 H(+). Its pathway is pyrimidine metabolism; CTP biosynthesis via de novo pathway; CTP from UDP: step 2/2. Its activity is regulated as follows. Allosterically activated by GTP, when glutamine is the substrate; GTP has no effect on the reaction when ammonia is the substrate. The allosteric effector GTP functions by stabilizing the protein conformation that binds the tetrahedral intermediate(s) formed during glutamine hydrolysis. Inhibited by the product CTP, via allosteric rather than competitive inhibition. Catalyzes the ATP-dependent amination of UTP to CTP with either L-glutamine or ammonia as the source of nitrogen. Regulates intracellular CTP levels through interactions with the four ribonucleotide triphosphates. The chain is CTP synthase from Maridesulfovibrio salexigens (strain ATCC 14822 / DSM 2638 / NCIMB 8403 / VKM B-1763) (Desulfovibrio salexigens).